The following is a 313-amino-acid chain: Protoheme IX farnesyltransferase (313 aa).

Transmembrane regions (helical) follow at residues 32–52 (VMSLVVFTALVGMLLAPGDFH), 53–73 (PVLAVTAMLCIAVGGGAAGAL), 120–140 (VLVNWIAAALLAFTIFFYVVI), 153–173 (IVIGGAAGALPPVVAWAAVTG), 180–200 (LLLFAIIFFWTPPHFWALALF), 226–246 (ILLYTIVLVAVAAAPWPLGYF), 248–268 (AVYGIASLALGGWMLVLAIRV), and 284–304 (LFKFSILYLFALFSILLIEVV).

Belongs to the UbiA prenyltransferase family. Protoheme IX farnesyltransferase subfamily.

The protein resides in the cell inner membrane. The enzyme catalyses heme b + (2E,6E)-farnesyl diphosphate + H2O = Fe(II)-heme o + diphosphate. The protein operates within porphyrin-containing compound metabolism; heme O biosynthesis; heme O from protoheme: step 1/1. In terms of biological role, converts heme B (protoheme IX) to heme O by substitution of the vinyl group on carbon 2 of heme B porphyrin ring with a hydroxyethyl farnesyl side group. The protein is Protoheme IX farnesyltransferase of Rhodopseudomonas palustris (strain BisB5).